A 1887-amino-acid chain; its full sequence is Nuclear pore membrane glycoprotein 210 (1887 aa).

Residues 1–26 form the signal peptide; it reads MAARGRGLLLLTLSVLLAAGPSAAAA. At 27-1808 the chain is on the perinuclear space side; it reads KLNIPKVLLP…LFQHFLDSYQ (1782 aa). N-linked (GlcNAc...) asparagine glycans are attached at residues asparagine 44, asparagine 337, asparagine 405, asparagine 484, asparagine 681, asparagine 801, asparagine 926, asparagine 1039, asparagine 1116, asparagine 1135, asparagine 1362, and asparagine 1441. Positions 1078-1151 constitute a BIG2 domain; that stretch reads FPPFRLMPRK…VQAVDAETGK (74 aa). The chain crosses the membrane as a helical span at residues 1809–1829; sequence VMFFTLFALLAGTAVMIIAYH. Residues 1830–1887 are Cytoplasmic-facing; the sequence is TVCTPRDLAVPAALTPRASPGHSPHYFAASSPTSPNALPPARKASPPSGLWSPAYASH. At threonine 1844 the chain carries Phosphothreonine. Residues 1853–1887 form a disordered region; it reads PHYFAASSPTSPNALPPARKASPPSGLWSPAYASH. Residues serine 1874, serine 1877, serine 1881, and serine 1886 each carry the phosphoserine modification.

This sequence belongs to the NUP210 family. As to quaternary structure, forms dimers and possibly higher-order oligomers. In terms of processing, N-glycosylated, but not all potential glycosylation sites may be used. Contains high-mannose type oligosaccharides. Phosphorylated at Ser-1881 in mitosis specifically; not phosphorylated in interphase. In terms of tissue distribution, ubiquitous expression, with highest levels in lung, liver, pancreas, testis, and ovary, intermediate levels in brain, kidney, and spleen, and lowest levels in heart and skeletal muscle.

It localises to the nucleus. Its subcellular location is the nuclear pore complex. The protein localises to the nucleus membrane. It is found in the endoplasmic reticulum membrane. Its function is as follows. Nucleoporin essential for nuclear pore assembly and fusion, nuclear pore spacing, as well as structural integrity. This is Nuclear pore membrane glycoprotein 210 (NUP210) from Homo sapiens (Human).